The primary structure comprises 278 residues: 4-deoxy-L-threo-5-hexosulose-uronate ketol-isomerase (278 aa).

Zn(2+)-binding residues include H196, H198, E203, and H245.

This sequence belongs to the KduI family. Homohexamer. It depends on Zn(2+) as a cofactor.

The enzyme catalyses 5-dehydro-4-deoxy-D-glucuronate = 3-deoxy-D-glycero-2,5-hexodiulosonate. The protein operates within glycan metabolism; pectin degradation; 2-dehydro-3-deoxy-D-gluconate from pectin: step 4/5. Catalyzes the isomerization of 5-dehydro-4-deoxy-D-glucuronate to 3-deoxy-D-glycero-2,5-hexodiulosonate. This chain is 4-deoxy-L-threo-5-hexosulose-uronate ketol-isomerase, found in Escherichia coli O139:H28 (strain E24377A / ETEC).